Reading from the N-terminus, the 170-residue chain is ATP synthase subunit b (170 aa).

A helical transmembrane segment spans residues 22–44 (IINLAVVVFGLYKFLPGFLGKIL).

This sequence belongs to the ATPase B chain family. As to quaternary structure, F-type ATPases have 2 components, F(1) - the catalytic core - and F(0) - the membrane proton channel. F(1) has five subunits: alpha(3), beta(3), gamma(1), delta(1), epsilon(1). F(0) has four main subunits: a(1), b(1), b'(1) and c(10-14). The alpha and beta chains form an alternating ring which encloses part of the gamma chain. F(1) is attached to F(0) by a central stalk formed by the gamma and epsilon chains, while a peripheral stalk is formed by the delta, b and b' chains.

The protein localises to the cellular thylakoid membrane. In terms of biological role, f(1)F(0) ATP synthase produces ATP from ADP in the presence of a proton or sodium gradient. F-type ATPases consist of two structural domains, F(1) containing the extramembraneous catalytic core and F(0) containing the membrane proton channel, linked together by a central stalk and a peripheral stalk. During catalysis, ATP synthesis in the catalytic domain of F(1) is coupled via a rotary mechanism of the central stalk subunits to proton translocation. Functionally, component of the F(0) channel, it forms part of the peripheral stalk, linking F(1) to F(0). In Prochlorococcus marinus (strain NATL1A), this protein is ATP synthase subunit b.